The chain runs to 215 residues: Ras-related protein Rab-42 (215 aa).

5 residues coordinate GTP: Gly-19, Gly-21, Lys-22, Thr-23, and Thr-44. Residues Thr-23, Thr-44, and Asp-68 each contribute to the Mg(2+) site. Positions 71, 128, 130, 157, and 158 each coordinate GTP. The interval 196–215 is disordered; sequence HRSPNPRSSSRKQDSGTCQC. Residues Cys-213 and Cys-215 are each lipidated (S-geranylgeranyl cysteine).

It belongs to the small GTPase superfamily. Rab family. Mg(2+) is required as a cofactor.

It is found in the membrane. It catalyses the reaction GTP + H2O = GDP + phosphate + H(+). Regulated by guanine nucleotide exchange factors (GEFs) which promote the exchange of bound GDP for free GTP. Regulated by GTPase activating proteins (GAPs) which increase the GTP hydrolysis activity. Inhibited by GDP dissociation inhibitors (GDIs). Its function is as follows. The small GTPases Rab are key regulators of intracellular membrane trafficking, from the formation of transport vesicles to their fusion with membranes. Rabs cycle between an inactive GDP-bound form and an active GTP-bound form that is able to recruit to membranes different sets of downstream effectors directly responsible for vesicle formation, movement, tethering and fusion. The physiological function of RAB42 remains undefined. In Mus musculus (Mouse), this protein is Ras-related protein Rab-42.